A 570-amino-acid polypeptide reads, in one-letter code: Enhancer of polycomb-like protein 1 (570 aa).

Positions 541–570 (ALNNLNSGQTSGQTMGSNPGPGAIAPTPET) are disordered. The segment covering 543–557 (NNLNSGQTSGQTMGS) has biased composition (polar residues).

Belongs to the enhancer of polycomb family. In terms of assembly, component of the NuA4 histone acetyltransferase complex.

It localises to the nucleus. Its function is as follows. Component of the NuA4 histone acetyltransferase complex which is involved in transcriptional activation of selected genes principally by acetylation of nucleosomal histone H4 and H2A. The NuA4 complex is also involved in DNA repair. Involved in gene silencing by neighboring heterochromatin, blockage of the silencing spreading along the chromosome, and required for cell cycle progression through G2/M. In Emericella nidulans (strain FGSC A4 / ATCC 38163 / CBS 112.46 / NRRL 194 / M139) (Aspergillus nidulans), this protein is Enhancer of polycomb-like protein 1 (epl1).